A 291-amino-acid chain; its full sequence is Kynurenine formamidase (291 aa).

The HGGXW signature appears at 33–37; that stretch reads HGGAW. Ser-107 serves as the catalytic Nucleophile. Catalysis depends on residues Asp-242 and His-280.

It belongs to the kynurenine formamidase family. Homodimer.

It catalyses the reaction N-formyl-L-kynurenine + H2O = L-kynurenine + formate + H(+). It functions in the pathway amino-acid degradation; L-tryptophan degradation via kynurenine pathway; L-kynurenine from L-tryptophan: step 2/2. In terms of biological role, catalyzes the hydrolysis of N-formyl-L-kynurenine to L-kynurenine, the second step in the kynurenine pathway of tryptophan degradation. Kynurenine may be further oxidized to nicotinic acid, NAD(H) and NADP(H). Required for elimination of toxic metabolites. This Debaryomyces hansenii (strain ATCC 36239 / CBS 767 / BCRC 21394 / JCM 1990 / NBRC 0083 / IGC 2968) (Yeast) protein is Kynurenine formamidase.